The following is a 407-amino-acid chain: Homeobox even-skipped homolog protein 1 (407 aa).

Disordered stretches follow at residues 29 to 120 (EAVG…SDFY) and 137 to 179 (EYQH…ACSA). Polar residues predominate over residues 102 to 114 (DSLSGQGQPSSSD). Positions 183 to 242 (MRRYRTAFTREQIARLEKEFYRENYVSRPRRCELAAALNLPETTIKVWFQNRRMKDKRQR) form a DNA-binding region, homeobox.

This sequence belongs to the even-skipped homeobox family.

The protein localises to the nucleus. Its function is as follows. May play a role in the specification of neuronal cell types. The sequence is that of Homeobox even-skipped homolog protein 1 (EVX1) from Homo sapiens (Human).